The primary structure comprises 138 residues: Sporulation-specific protein 13 (138 aa).

A compositionally biased stretch (polar residues) spans 1 to 11; that stretch reads MMSNSQISKLF. A disordered region spans residues 1–31; it reads MMSNSQISKLFSSISNKENSNENALKESTNK. The segment covering 12-23 has biased composition (low complexity); that stretch reads SSISNKENSNEN. The stretch at 16 to 104 forms a coiled coil; that stretch reads NKENSNENAL…KRELDYLRAK (89 aa).

As to quaternary structure, interacts with spo2.

The protein localises to the cytoplasm. It is found in the cytoskeleton. Its subcellular location is the microtubule organizing center. The protein resides in the spindle pole body. Functionally, involved in sporulation. Plays a significant role in modification of the spindle pole body prior to spore formation and is required for initiating forespore membrane formation. This Schizosaccharomyces pombe (strain 972 / ATCC 24843) (Fission yeast) protein is Sporulation-specific protein 13 (spo13).